The following is a 396-amino-acid chain: MKKYNRIFTIVIDSLGIGEMSDSKEYGDVNVDTLRHISESVDEFKIPNLQKLGLANLHPIKHVEAVEKPLAHFMKMREASVGKDTMTGHWEMMGLKIETPFQTFTDTGFPQELLDELEKRTGHKIVGNKSASGTEILDELGEHQIKTGDMIVYTSADSVLQICGHEETFGLDELYRCCEIARELTLKDEWKVGRVIARPYLGMKKGEFKRTSNRHDYALKPYGATALNALKDNGFASISVGKINDIFDGEGITESNKSKSSVHGMEQTLEIMDKEFKGSCFVNLVDFDALWGHRRNPVGYAEELEKFDVNLGKVLDKLKEDDLLIITADHGNDPTYKGTDHTREHVPFLAYSPSMTESGLMETSDSFAAIGATIAENFGVKMPENTIGESVLSKLV.

Residues aspartate 13, aspartate 288, histidine 293, aspartate 329, histidine 330, and histidine 341 each contribute to the Mn(2+) site.

This sequence belongs to the phosphopentomutase family. The cofactor is Mn(2+).

It is found in the cytoplasm. The catalysed reaction is 2-deoxy-alpha-D-ribose 1-phosphate = 2-deoxy-D-ribose 5-phosphate. It catalyses the reaction alpha-D-ribose 1-phosphate = D-ribose 5-phosphate. It participates in carbohydrate degradation; 2-deoxy-D-ribose 1-phosphate degradation; D-glyceraldehyde 3-phosphate and acetaldehyde from 2-deoxy-alpha-D-ribose 1-phosphate: step 1/2. In terms of biological role, isomerase that catalyzes the conversion of deoxy-ribose 1-phosphate (dRib-1-P) and ribose 1-phosphate (Rib-1-P) to deoxy-ribose 5-phosphate (dRib-5-P) and ribose 5-phosphate (Rib-5-P), respectively. The chain is Phosphopentomutase from Clostridium beijerinckii (strain ATCC 51743 / NCIMB 8052) (Clostridium acetobutylicum).